The chain runs to 408 residues: MSVTPTANSTEEAANITASPRLWPYTEPASAIIILVVSLIILLTIVGNVLVIVAVLTSRALRAPQNLFLVSLACADILVATLVIPFSLANEIMGYWYFGSTWCAFYLALDVLFCTSSIVHLCAISLDRYWSVTKAVRYNLKRTPRRIKCMIAVVWLISAVISFPPLIMTKHDEKECLINDETWYILSSCAVSFFAPGLIMITVYCKIYRVAKQRSSTVFVAKNGLERQPSQSETCFVRKDKFEKESPSSNSSESAQRQEELDDIDLEESAASDSRARGSRFSKRRRVEGERRGPQRSCRVSWAAHQEPGSRQQQLASKSKVAQMREKRFTFVLAVVMGVFVLCWFPFFFTYSLQAVCGERCGPPEALFKLFFWIGYCNSSVNPIIYTIFNRDFRKAFKKVVCWSAQRT.

Residues Met-1 to Ser-30 lie on the Extracellular side of the membrane. N-linked (GlcNAc...) asparagine glycans are attached at residues Asn-8 and Asn-15. Residues Ala-31–Val-55 form a helical membrane-spanning segment. Residues Leu-56–Leu-67 lie on the Cytoplasmic side of the membrane. The chain crosses the membrane as a helical span at residues Phe-68–Met-93. Residues Gly-94–Cys-103 are Extracellular-facing. A disulfide bond links Cys-103 and Cys-176. The helical transmembrane segment at Ala-104–Leu-126 threads the bilayer. At Asp-127–Ile-147 the chain is on the cytoplasmic side. Residues Lys-148–Lys-170 traverse the membrane as a helical segment. Residues His-171–Glu-181 lie on the Extracellular side of the membrane. Residues Thr-182–Cys-205 traverse the membrane as a helical segment. Residues Lys-206–Val-332 lie on the Cytoplasmic side of the membrane. The disordered stretch occupies residues Phe-242–Gln-306. Acidic residues predominate over residues Glu-260–Ala-270. A compositionally biased stretch (basic residues) spans Arg-277–Arg-286. The helical transmembrane segment at Leu-333–Val-356 threads the bilayer. At Cys-357–Lys-369 the chain is on the extracellular side. The helical transmembrane segment at Leu-370–Asn-390 threads the bilayer. Residues Arg-391 to Thr-408 lie on the Cytoplasmic side of the membrane.

It belongs to the G-protein coupled receptor 1 family. Adrenergic receptor subfamily. ADRA2D sub-subfamily.

Its subcellular location is the cell membrane. Its function is as follows. Alpha-2 adrenergic receptors mediate the catecholamine-induced inhibition of adenylate cyclase through the action of G proteins. The order of potency for this receptor is dexmedetomidine &gt; norepinephrine &gt; epinephrine &gt; oxymetazoline. The sequence is that of Alpha-2Da adrenergic receptor (adra2da) from Danio rerio (Zebrafish).